Reading from the N-terminus, the 252-residue chain is 5-oxoprolinase subunit A 1 (252 aa).

The protein belongs to the LamB/PxpA family. In terms of assembly, forms a complex composed of PxpA, PxpB and PxpC.

It carries out the reaction 5-oxo-L-proline + ATP + 2 H2O = L-glutamate + ADP + phosphate + H(+). Its function is as follows. Catalyzes the cleavage of 5-oxoproline to form L-glutamate coupled to the hydrolysis of ATP to ADP and inorganic phosphate. This Pseudomonas aeruginosa (strain ATCC 15692 / DSM 22644 / CIP 104116 / JCM 14847 / LMG 12228 / 1C / PRS 101 / PAO1) protein is 5-oxoprolinase subunit A 1.